The sequence spans 205 residues: Thiamine-phosphate synthase (205 aa).

Residues 34–38 and Asn66 each bind 4-amino-2-methyl-5-(diphosphooxymethyl)pyrimidine; that span reads QLRCK. Positions 67 and 86 each coordinate Mg(2+). Ser105 provides a ligand contact to 4-amino-2-methyl-5-(diphosphooxymethyl)pyrimidine. 131-133 lines the 2-[(2R,5Z)-2-carboxy-4-methylthiazol-5(2H)-ylidene]ethyl phosphate pocket; that stretch reads TTT. Position 134 (Lys134) interacts with 4-amino-2-methyl-5-(diphosphooxymethyl)pyrimidine. Gly163 is a binding site for 2-[(2R,5Z)-2-carboxy-4-methylthiazol-5(2H)-ylidene]ethyl phosphate.

The protein belongs to the thiamine-phosphate synthase family. Mg(2+) is required as a cofactor.

The enzyme catalyses 2-[(2R,5Z)-2-carboxy-4-methylthiazol-5(2H)-ylidene]ethyl phosphate + 4-amino-2-methyl-5-(diphosphooxymethyl)pyrimidine + 2 H(+) = thiamine phosphate + CO2 + diphosphate. The catalysed reaction is 2-(2-carboxy-4-methylthiazol-5-yl)ethyl phosphate + 4-amino-2-methyl-5-(diphosphooxymethyl)pyrimidine + 2 H(+) = thiamine phosphate + CO2 + diphosphate. It catalyses the reaction 4-methyl-5-(2-phosphooxyethyl)-thiazole + 4-amino-2-methyl-5-(diphosphooxymethyl)pyrimidine + H(+) = thiamine phosphate + diphosphate. It participates in cofactor biosynthesis; thiamine diphosphate biosynthesis; thiamine phosphate from 4-amino-2-methyl-5-diphosphomethylpyrimidine and 4-methyl-5-(2-phosphoethyl)-thiazole: step 1/1. Its function is as follows. Condenses 4-methyl-5-(beta-hydroxyethyl)thiazole monophosphate (THZ-P) and 2-methyl-4-amino-5-hydroxymethyl pyrimidine pyrophosphate (HMP-PP) to form thiamine monophosphate (TMP). This chain is Thiamine-phosphate synthase, found in Neisseria meningitidis serogroup A / serotype 4A (strain DSM 15465 / Z2491).